A 449-amino-acid polypeptide reads, in one-letter code: F-box/LRR-repeat protein At3g60040 (449 aa).

An F-box domain is found at 12–64 (RDAISWLPDEVLGKILSLIPTKQAVSTSLLAKKWRTIFRLVDHLELDDSFSLQ). LRR repeat units follow at residues 161 to 188 (LTLG…FIDT), 191 to 215 (FYDI…SVHH), 216 to 237 (HDFI…SVDY), 239 to 263 (CPDD…EYSH), 287 to 312 (ERKV…HLSP), and 340 to 365 (KNKR…IVKD).

The polypeptide is F-box/LRR-repeat protein At3g60040 (Arabidopsis thaliana (Mouse-ear cress)).